The following is a 205-amino-acid chain: Adenylyl-sulfate kinase (205 aa).

35–42 (GLSGAGKS) contributes to the ATP binding site. Serine 109 serves as the catalytic Phosphoserine intermediate.

Belongs to the APS kinase family.

It catalyses the reaction adenosine 5'-phosphosulfate + ATP = 3'-phosphoadenylyl sulfate + ADP + H(+). It participates in sulfur metabolism; hydrogen sulfide biosynthesis; sulfite from sulfate: step 2/3. Catalyzes the synthesis of activated sulfate. The polypeptide is Adenylyl-sulfate kinase (Acaryochloris marina (strain MBIC 11017)).